The following is a 420-amino-acid chain: Gamma-glutamyl phosphate reductase (420 aa).

Belongs to the gamma-glutamyl phosphate reductase family.

The protein resides in the cytoplasm. It catalyses the reaction L-glutamate 5-semialdehyde + phosphate + NADP(+) = L-glutamyl 5-phosphate + NADPH + H(+). It participates in amino-acid biosynthesis; L-proline biosynthesis; L-glutamate 5-semialdehyde from L-glutamate: step 2/2. In terms of biological role, catalyzes the NADPH-dependent reduction of L-glutamate 5-phosphate into L-glutamate 5-semialdehyde and phosphate. The product spontaneously undergoes cyclization to form 1-pyrroline-5-carboxylate. In Shewanella amazonensis (strain ATCC BAA-1098 / SB2B), this protein is Gamma-glutamyl phosphate reductase.